The chain runs to 529 residues: MTKYIIVTGGVLSSVGKGTIVASIGFLLKSSGYNVTAIKVDPYLNVDAGTMNPYMHGEVFVTDDGAETDLDLGHYERFIGINTTRYNNITAGRVYFEVIRKEREGKYLGQTVQIIPHVTDEIKGLVKKAVDDTNAEIAIIEIGGTVGDIEGLPFLEAVRQMKLEEEENLMFIHVALVEYLRVTGELKTKPLQHSVQELRRIGIQPDMIIARSILPLDEETKKKIALFTNVKPDYILSNYDVELTYEVPLILEKQNITKKIFNKLGLEPKEPKVAEWLEFVENMKNPSKEVKIALVGKYTKLKDSYLSIKEAIYHAAAKLRVKPTLVWVESSDLEKSEDEINKLKDVNGIIVLPGFGARGVEGKIQAIKFARENNIPFLGICFGMQLAIVEYARNVLGLKEANTTEVNPNTKYPIITLLDNQKKIVQVGGTMRLGAQKIILKEGTLAYSIYNSPHIYERHRHRYEVNPEYVDLLQKYGMIISGVSENGLVEIIELKNHKFFLGTQAHPEYKSRPLSPSPVFLNFLSVASA.

The tract at residues methionine 1–leucine 266 is amidoligase domain. Residue serine 13 participates in CTP binding. Serine 13 contacts UTP. Residue serine 14–threonine 19 coordinates ATP. Residue tyrosine 54 coordinates L-glutamine. Aspartate 71 provides a ligand contact to ATP. 2 residues coordinate Mg(2+): aspartate 71 and glutamate 141. CTP contacts are provided by residues aspartate 148 to glutamate 150, lysine 187 to glutamine 192, and lysine 223. Residues lysine 187–glutamine 192 and lysine 223 contribute to the UTP site. In terms of domain architecture, Glutamine amidotransferase type-1 spans lysine 291–alanine 529. An L-glutamine-binding site is contributed by glycine 354. Catalysis depends on cysteine 381, which acts as the Nucleophile; for glutamine hydrolysis. Residues phenylalanine 382 to glutamine 385, glutamate 405, and arginine 462 contribute to the L-glutamine site. Active-site residues include histidine 506 and glutamate 508.

The protein belongs to the CTP synthase family. As to quaternary structure, homotetramer.

The enzyme catalyses UTP + L-glutamine + ATP + H2O = CTP + L-glutamate + ADP + phosphate + 2 H(+). It catalyses the reaction L-glutamine + H2O = L-glutamate + NH4(+). It carries out the reaction UTP + NH4(+) + ATP = CTP + ADP + phosphate + 2 H(+). It functions in the pathway pyrimidine metabolism; CTP biosynthesis via de novo pathway; CTP from UDP: step 2/2. Its activity is regulated as follows. Allosterically activated by GTP, when glutamine is the substrate; GTP has no effect on the reaction when ammonia is the substrate. The allosteric effector GTP functions by stabilizing the protein conformation that binds the tetrahedral intermediate(s) formed during glutamine hydrolysis. Inhibited by the product CTP, via allosteric rather than competitive inhibition. Its function is as follows. Catalyzes the ATP-dependent amination of UTP to CTP with either L-glutamine or ammonia as the source of nitrogen. Regulates intracellular CTP levels through interactions with the four ribonucleotide triphosphates. The polypeptide is CTP synthase (Sulfolobus acidocaldarius (strain ATCC 33909 / DSM 639 / JCM 8929 / NBRC 15157 / NCIMB 11770)).